The primary structure comprises 1969 residues: Myosin-3 (1969 aa).

The Myosin N-terminal SH3-like domain occupies 33 to 82 (DSKKNCWIPDPEDGFVAAEIQSTTGEQVTVVTVKGNQITVKKDQCQEMNP). The 706-residue stretch at 86-791 (DKTEDMANLT…VLAKLEDLRD (706 aa)) folds into the Myosin motor domain. N6,N6,N6-trimethyllysine is present on lysine 130. 179–186 (GESGAGKT) lines the ATP pocket. Actin-binding regions lie at residues 667-689 (LNNL…IPNE) and 770-784 (KVGE…GVLA). An IQ domain is found at 794 to 823 (LSRIVTMFQSRIRSYLAKAEVRRRYEQQTG). Positions 857 to 1969 (KEQEAMGELA…IRSSSNARFL (1113 aa)) form a coiled coil. Disordered stretches follow at residues 942 to 966 (MQER…TKKH), 1006 to 1029 (NKEK…EEDK), 1131 to 1213 (LEEE…GDSV), and 1234 to 1255 (KSKL…VRSR). Composition is skewed to basic and acidic residues over residues 1137 to 1164 (AERN…ERLE) and 1176 to 1197 (ANKK…DSLN).

Belongs to the TRAFAC class myosin-kinesin ATPase superfamily. Myosin family. Muscle myosin is a hexameric protein that consists of 2 heavy chain subunits (MHC), 2 alkali light chain subunits (MLC) and 2 regulatory light chain subunits (MLC-2). In terms of tissue distribution, expressed in body wall muscles, neighboring vulval muscle cells and the contractile sheath covering the hermaphrodite gonad (myoepithelial sheath cells).

The protein resides in the cytoplasm. The protein localises to the myofibril. Its subcellular location is the sarcomere. It localises to the a band. Functionally, essential for muscle contraction. Involved in ovulation likely by regulating the contraction of gonadal myoepithelial sheath cells. The sequence is that of Myosin-3 (myo-3) from Caenorhabditis elegans.